A 1097-amino-acid chain; its full sequence is Protein STICHEL-like 3 (1097 aa).

5 disordered regions span residues 1 to 22, 74 to 168, 220 to 293, 321 to 358, and 400 to 436; these read MTTT…NNRI, SLRD…YRIG, NVRP…GFGE, GRSL…DSSS, and DSDL…LTEK. Residues 10 to 20 show a composition bias toward polar residues; the sequence is RVASSSSTRNN. Residues 95-113 are compositionally biased toward basic and acidic residues; that stretch reads LPKKGDLVEGGRRSVDLKK. Positions 126–136 are enriched in polar residues; that stretch reads PVVNFGTSKVT. Basic and acidic residues predominate over residues 137-168; the sequence is PSDERSGPVSGERDSGRRVKREESSRKSYRIG. Residues 227–241 are compositionally biased toward gly residues; sequence YGGGGGGGNTRGCAG. Residues 245–259 are compositionally biased toward basic residues; that stretch reads RPKRRKFRGTRRVRG. Basic and acidic residues-rich tracts occupy residues 281-291 and 332-345; these read VEKHDGEKEGF and KGGR…RNGS. The segment covering 346–358 has biased composition (low complexity); sequence DKMMIQSDDDSSS. A compositionally biased stretch (basic residues) spans 411–429; the sequence is EKKHKKKSHVNARHRHRQQ. Residue 472–479 coordinates ATP; that stretch reads GPNGTGKT. 4 residues coordinate Zn(2+): Cys491, Cys500, Cys503, and Cys506. Positions 742-770 form a coiled coil; the sequence is KEDMEKLRQALKTLSEAEKQLRVSNDKLT. Disordered regions lie at residues 790–828, 913–932, and 956–1003; these read SSTA…DSRK, DPRN…DKSL, and VTES…SQSI. Basic and acidic residues-rich tracts occupy residues 796 to 807 and 818 to 828; these read GGRESSDHHLDP and GLDRRRGDSRK. A compositionally biased stretch (polar residues) spans 993 to 1003; the sequence is ASQSQNQSQSI.

Belongs to the DnaX/STICHEL family.

The chain is Protein STICHEL-like 3 from Arabidopsis thaliana (Mouse-ear cress).